The primary structure comprises 336 residues: Deoxyhypusine hydroxylase (336 aa).

HEAT-like PBS-type repeat units follow at residues 68-94 (LKHE…VVQD) and 101-127 (CRHE…LRDN). Histidine 70, glutamate 71, histidine 103, and glutamate 104 together coordinate Fe cation. The interval 158–179 (LKPSDFTSIDPAPPMPLTAKEP) is disordered. HEAT-like PBS-type repeat units lie at residues 235 to 261 (FRHE…TLSD) and 268 to 295 (VRHE…FLND). Fe cation contacts are provided by histidine 237, glutamate 238, histidine 270, and glutamate 271.

It belongs to the deoxyhypusine hydroxylase family. The cofactor is Fe(2+).

It localises to the cytoplasm. The protein localises to the nucleus. It catalyses the reaction [eIF5A protein]-deoxyhypusine + AH2 + O2 = [eIF5A protein]-hypusine + A + H2O. It functions in the pathway protein modification; eIF5A hypusination. Functionally, catalyzes the hydroxylation of the N(6)-(4-aminobutyl)-L-lysine intermediate to form hypusine, an essential post-translational modification only found in mature eIF-5A factor. This chain is Deoxyhypusine hydroxylase (lia1), found in Emericella nidulans (strain FGSC A4 / ATCC 38163 / CBS 112.46 / NRRL 194 / M139) (Aspergillus nidulans).